We begin with the raw amino-acid sequence, 399 residues long: MQETIPDSRGRFGEFGGKYVPETLMSAIEELEAGLAKAMVDPAFIGELKADLAEYAGRETPLTFAKNISAKLGGANIYLKREDLVHTGAHKLNNAIGQGLLAKRMGKNKLVAETGAGQHGVATATVASRLGMECKVFMGVEDMKRQELNVFRMELLGAEVVPAETGSRTLKDATNEAIRYWVSHADDTFYLIGSVVGPHPYPKMVRNFQRVIGDEAKQQMAEKTGRLPDTIVACVGGGSNAIGMFYPFLDDEVELVGVEAAGRGLDTAEHAATISKGSKGIIHGSLTYLLQDESGQIKEPYSISAGLDYPGVGPEHAYLAAQKRVRYEAVTDKEALDALALLAKEEGIIPAIESAHALAKAFQMAKTMTPNQSVLVCLSGRGDKDMHTLQRVYKEGYDE.

The residue at position 91 (lysine 91) is an N6-(pyridoxal phosphate)lysine.

Belongs to the TrpB family. Tetramer of two alpha and two beta chains. The cofactor is pyridoxal 5'-phosphate.

The enzyme catalyses (1S,2R)-1-C-(indol-3-yl)glycerol 3-phosphate + L-serine = D-glyceraldehyde 3-phosphate + L-tryptophan + H2O. It participates in amino-acid biosynthesis; L-tryptophan biosynthesis; L-tryptophan from chorismate: step 5/5. Its function is as follows. The beta subunit is responsible for the synthesis of L-tryptophan from indole and L-serine. This chain is Tryptophan synthase beta chain, found in Shouchella clausii (strain KSM-K16) (Alkalihalobacillus clausii).